The following is a 166-amino-acid chain: NADH-quinone oxidoreductase subunit C (166 aa).

Belongs to the complex I 30 kDa subunit family. In terms of assembly, NDH-1 is composed of 14 different subunits. Subunits NuoB, C, D, E, F, and G constitute the peripheral sector of the complex.

It is found in the cell inner membrane. The catalysed reaction is a quinone + NADH + 5 H(+)(in) = a quinol + NAD(+) + 4 H(+)(out). Functionally, NDH-1 shuttles electrons from NADH, via FMN and iron-sulfur (Fe-S) centers, to quinones in the respiratory chain. The immediate electron acceptor for the enzyme in this species is believed to be a menaquinone. Couples the redox reaction to proton translocation (for every two electrons transferred, four hydrogen ions are translocated across the cytoplasmic membrane), and thus conserves the redox energy in a proton gradient. The protein is NADH-quinone oxidoreductase subunit C of Chlorobium phaeobacteroides (strain DSM 266 / SMG 266 / 2430).